The sequence spans 179 residues: Large ribosomal subunit protein uL5 (179 aa).

It belongs to the universal ribosomal protein uL5 family. Part of the 50S ribosomal subunit; part of the 5S rRNA/L5/L18/L25 subcomplex. Contacts the 5S rRNA and the P site tRNA. Forms a bridge to the 30S subunit in the 70S ribosome.

In terms of biological role, this is one of the proteins that bind and probably mediate the attachment of the 5S RNA into the large ribosomal subunit, where it forms part of the central protuberance. In the 70S ribosome it contacts protein S13 of the 30S subunit (bridge B1b), connecting the 2 subunits; this bridge is implicated in subunit movement. Contacts the P site tRNA; the 5S rRNA and some of its associated proteins might help stabilize positioning of ribosome-bound tRNAs. In Shouchella clausii (strain KSM-K16) (Alkalihalobacillus clausii), this protein is Large ribosomal subunit protein uL5.